The following is a 68-amino-acid chain: uncharacterized protein (68 aa).

Positions 1–42 (MHLCQNGHYYKPHRASAEKVPYLKKKKKNSRNEGKAKKKNEK) are disordered.

This is an uncharacterized protein from Saccharomyces cerevisiae (strain ATCC 204508 / S288c) (Baker's yeast).